The primary structure comprises 562 residues: MENIVQKAKEEIKDVVLKALNEAKKEGLLNFESIQDVEVEEPKEKQHGDLATNFAMVMAREAKMAPRKIAEIIASKMNTSGTFIEKVEVAGPGFINFFLNQNFLIETLKLIHKRGKDYGRVNLGKGKKVQVEFVSANPTGPMHMGNARGGAIGDVLASILDYAGYNVSREFYINDAGNQIEKFGYSLEARYLQLLGIDAEVPEGGYHGEDIIDRAKEFLEIHGDKYKDVPSEERRKALIEYGLKKNIEKMKEDLVLYGIEYDVWFSEQSLYDSGEVYKVIEELTEKGYTYEKDGALWFKMTLFGAEKDDVLVRSNGVPTYLASDIAYHKNKFVTRGFDWVINVWGADHHGHVAPMKGAMKALGIDPNRLDVVLMQLVKLIEGGQVVRMSKRTGKMITLRDLIEEVGKDAARFFFNMRSPDSPIEFDLDLAKQQTNENPVFYVQYAHARICSIIRQLEEMGVKIENIEDVDLGLLKEEEEVDLIKKLAYFPEEITIAAKTLAPHRITRYVIDVASLFHSFYNSHRVKGAEENLMKARFALILAVKTVLKNALDILKVTAPERM.

The short motif at 136–146 (ANPTGPMHMGN) is the 'HIGH' region element.

Belongs to the class-I aminoacyl-tRNA synthetase family. As to quaternary structure, monomer.

The protein localises to the cytoplasm. The catalysed reaction is tRNA(Arg) + L-arginine + ATP = L-arginyl-tRNA(Arg) + AMP + diphosphate. The polypeptide is Arginine--tRNA ligase (argS) (Caldanaerobacter subterraneus subsp. tengcongensis (strain DSM 15242 / JCM 11007 / NBRC 100824 / MB4) (Thermoanaerobacter tengcongensis)).